A 161-amino-acid chain; its full sequence is uncharacterized protein (161 aa).

A helical membrane pass occupies residues 5–25 (GPTLLSLLAALLVSLGLLLWY).

The protein belongs to the IIV-6 203L/325L family.

The protein resides in the membrane. This is an uncharacterized protein from Invertebrate iridescent virus 3 (IIV-3).